The primary structure comprises 546 residues: MTPSELRRLYSIVRVLLSYGLDELIPKMRLTFPLRAGRRLLFWLPNRHRNMPLGERLRLALQELGPVWIKFGQMMSTRRDLFPPAIADQLAMLQDKVEPFDGKLAREQIELSMGGIPLEEWFDDFDIKPLASASIAQVHTACLKSTGKEIVIKVIRPDILPVIKADMRLMKRLAGWLPRLLPDGRRLRPREVVLEYEKTLLDELNLLREAANAIQLRRNFENSPMLYVPEIYSDYCSEGMLVMERIYGIPVSDVDALKANGTDMKLLAERGVQVFFTQVFRDSFFHADMHPGNIFISYEHPEDPQYIGIDCGIVGSLNKEDKRYLAENFIAFFNRDYRKVAELHVDSGWVPADTNVADFEFAIRTVCEPIFEKPLAEISFGHVLLNLFNTARRFNMEVQPQLVLLQKTLLYIEGVGRQLYPQLDLWKTAKPFLETWMKRQVGLPAVFRALKEKAPFWAEKLPEVPELFYDGLRQHKMLKHSVDQLAYELKTQQARQGQSRYLLGIGATLLISGTLLLISRVEADMVPAGLMAAGIVTWIIGWRRTR.

The Protein kinase domain occupies 124 to 502; it reads DFDIKPLASA…QARQGQSRYL (379 aa). ATP is bound by residues 130–138 and K153; that span reads LASASIAQV. Catalysis depends on D288, which acts as the Proton acceptor. 2 consecutive transmembrane segments (helical) span residues 499–519 and 521–541; these read SRYLLGIGATLLISGTLLLIS and VEADMVPAGLMAAGIVTWIIG.

This sequence belongs to the ABC1 family. UbiB subfamily.

Its subcellular location is the cell inner membrane. It participates in cofactor biosynthesis; ubiquinone biosynthesis [regulation]. Functionally, is probably a protein kinase regulator of UbiI activity which is involved in aerobic coenzyme Q (ubiquinone) biosynthesis. This Pectobacterium carotovorum subsp. carotovorum (strain PC1) protein is Probable protein kinase UbiB.